Consider the following 669-residue polypeptide: PAN2-PAN3 deadenylation complex subunit PAN3 (669 aa).

The segment covering 1–10 (MATTFGSPSG) has biased composition (polar residues). A disordered region spans residues 1-25 (MATTFGSPSGDSRRGVASPRPKGRE). The C3H1-type zinc finger occupies 25-54 (EAKNTFCRNVTIYGHCRYENSKCRPPHLPD). The segment at 247–519 (QVMPNSTLPV…DIDNFLGGIS (273 aa)) is pseudokinase domain. ATP contacts are provided by residues R298, 347 to 354 (DYHPNSKS), and 408 to 409 (SK). Residues 520–558 (DQLASVFDSELHAQDTLTNTLGRELESSRIVRLLVKLNM) are a coiled coil. A knob domain region spans residues 559–669 (VNERPELDAS…LIRAGRGQGK (111 aa)).

Belongs to the protein kinase superfamily. PAN3 family. As to quaternary structure, homodimer. Forms a heterotrimer with a catalytic subunit PAN2 to form the poly(A)-nuclease (PAN) deadenylation complex. Interacts (via PAM-2 motif) with poly(A)-binding protein PAB1 (via PABC domain), conferring substrate specificity of the enzyme complex.

The protein resides in the cytoplasm. Regulatory subunit of the poly(A)-nuclease (PAN) deadenylation complex, one of two cytoplasmic mRNA deadenylases involved in mRNA turnover. PAN specifically shortens poly(A) tails of RNA and the activity is stimulated by poly(A)-binding protein PAB1. PAN deadenylation is followed by rapid degradation of the shortened mRNA tails by the CCR4-NOT complex. Deadenylated mRNAs are then degraded by two alternative mechanisms, namely exosome-mediated 3'-5' exonucleolytic degradation, or deadenylation-dependent mRNA decaping and subsequent 5'-3' exonucleolytic degradation by XRN1. May also be involved in post-transcriptional maturation of mRNA poly(A) tails. PAN3 acts as a positive regulator for PAN activity, recruiting the catalytic subunit PAN2 to mRNA via its interaction with RNA and with PAB1. This is PAN2-PAN3 deadenylation complex subunit PAN3 from Phaeosphaeria nodorum (strain SN15 / ATCC MYA-4574 / FGSC 10173) (Glume blotch fungus).